Here is a 407-residue protein sequence, read N- to C-terminus: MSYPIERVRADFPLLASEVNGQPLAYLDSAASAQKPHSVIDREAEFYRHEYAAVHRGIHTLSAQATSAMEAVREKVASFINAASAEEIVFVRGTTEAINLVANSYGRTFIQPGDNLIITEMEHHANIVPWQMLAEAHGVEVRVLPLAEDGSLDVAQLPVLLDERTRLLAVTQISNVLGTLNPVKAMIAQAKAAGAVVLIDGAQSIMHQPVDVQDLDCDFFVFSGHKIYGPSGIGVLYGKRDLLQAMPPWEGGGAMIRQVSLRTGITYADSPWRFEAGSPNTGGIMGLGAALDYVTALGREDIQRYESSLMQYALEALTQVPDLTLYGPAERHGVIAFNLGQHHAYDVGSFLDRYGIAIRTGHHCAMPLMEHYGVPSMCRASLAVYTTREEIDRLVAGLQRIHRLLGS.

Residue lysine 226 is modified to N6-(pyridoxal phosphate)lysine. The active-site Cysteine persulfide intermediate is cysteine 364.

This sequence belongs to the class-V pyridoxal-phosphate-dependent aminotransferase family. Csd subfamily. In terms of assembly, homodimer. Interacts with SufE and the SufBCD complex composed of SufB, SufC and SufD. The interaction with SufE is required to mediate the direct transfer of the sulfur atom from the S-sulfanylcysteine. The cofactor is pyridoxal 5'-phosphate.

Its subcellular location is the cytoplasm. The catalysed reaction is (sulfur carrier)-H + L-cysteine = (sulfur carrier)-SH + L-alanine. The enzyme catalyses L-selenocysteine + AH2 = hydrogenselenide + L-alanine + A + H(+). The protein operates within cofactor biosynthesis; iron-sulfur cluster biosynthesis. In terms of biological role, cysteine desulfurases mobilize the sulfur from L-cysteine to yield L-alanine, an essential step in sulfur metabolism for biosynthesis of a variety of sulfur-containing biomolecules. Component of the suf operon, which is activated and required under specific conditions such as oxidative stress and iron limitation. Acts as a potent selenocysteine lyase in vitro, that mobilizes selenium from L-selenocysteine. Selenocysteine lyase activity is however unsure in vivo. The sequence is that of Cysteine desulfurase from Pectobacterium atrosepticum (strain SCRI 1043 / ATCC BAA-672) (Erwinia carotovora subsp. atroseptica).